The following is a 229-amino-acid chain: MAWSFRAKVQLGGLLLSLLGWVCSCVTTILPQWKTLNLELNEMETWIMGIWEVCVDREEVATVCKAFESFLSLPQELQVARILMVASHGLGLLGLLLCSFGSECFQFHRIRWVFKRRLGLLGRTLEASASATTLLPVSWVAHATIQDFWDDSIPDIIPRWEFGGALYLGWAAGIFLALGGLLLIFSACLGKEDVPFPLMAGPTVPLSCAPVEESDGSFHLMLRPRNLVI.

Residues Met1–Gln10 are Cytoplasmic-facing. A helical transmembrane segment spans residues Leu11–Pro31. Topologically, residues Gln32 to Arg81 are extracellular. The chain crosses the membrane as a helical span at residues Ile82–Ser102. Over Glu103–Thr124 the chain is Cytoplasmic. Residues Leu125–Ile145 traverse the membrane as a helical segment. Residues Gln146–Gly164 are Extracellular-facing. A helical membrane pass occupies residues Ala165–Phe185. Residues Ser186–Ile229 are Cytoplasmic-facing.

The protein belongs to the claudin family.

The protein localises to the cell junction. It is found in the tight junction. It localises to the cell membrane. In terms of biological role, plays a major role in tight junction-specific obliteration of the intercellular space, through calcium-independent cell-adhesion activity. This Homo sapiens (Human) protein is Claudin-25 (CLDN25).